A 723-amino-acid chain; its full sequence is 1,3-beta-galactosyl-N-acetylhexosamine phosphorylase Cphy0577 (723 aa).

Residue Asp-317 is the Proton donor of the active site.

It belongs to the glycoside hydrolase 112 family.

It catalyses the reaction beta-D-galactosyl-(1-&gt;3)-N-acetyl-D-glucosamine + phosphate = alpha-D-galactose 1-phosphate + N-acetyl-D-glucosamine. Functionally, reversibly phosphorolyzes beta-D-galactopyranosyl-(1-&gt;3)-N-acetyl-D-glucosamine to form alpha-D-galactopyranose 1-phosphate and acetyl-D-glucosamine. Active towards galacto-N-biose and lacto-N-biose. Does not phosphorolyze galacto-N-tetraose or lacto-N-tetraose. In the reverse reaction has activity toward N-acetyl-D-glucosamine and N-acetyl-D-galactosamine, but not L-rhamnose, D-glucose or D-galactose. The sequence is that of 1,3-beta-galactosyl-N-acetylhexosamine phosphorylase Cphy0577 from Lachnoclostridium phytofermentans (strain ATCC 700394 / DSM 18823 / ISDg) (Clostridium phytofermentans).